The following is a 223-amino-acid chain: RNA-free ribonuclease P (223 aa).

This sequence belongs to the HARP family.

It carries out the reaction Endonucleolytic cleavage of RNA, removing 5'-extranucleotides from tRNA precursor.. RNA-free RNase P that catalyzes the removal of the 5'-leader sequence from pre-tRNA to produce the mature 5'-terminus. The polypeptide is RNA-free ribonuclease P (Methanococcus maripaludis (strain C7 / ATCC BAA-1331)).